We begin with the raw amino-acid sequence, 396 residues long: Acetyl-CoA acetyltransferase (396 aa).

The Acyl-thioester intermediate role is filled by Cys-88. Catalysis depends on proton acceptor residues His-352 and Cys-382.

This sequence belongs to the thiolase-like superfamily. Thiolase family. Homotetramer.

It catalyses the reaction 2 acetyl-CoA = acetoacetyl-CoA + CoA. It functions in the pathway biopolymer metabolism; poly-(R)-3-hydroxybutanoate biosynthesis. When expressed in E.coli with Synechocystis PhaB, PhaC and PhaE confers the ability to synthesize up to 12% (w/w) poly(3-hydroxybutyrate) (PHB) depending on the carbon source. The sequence is that of Acetyl-CoA acetyltransferase from Synechocystis sp. (strain ATCC 27184 / PCC 6803 / Kazusa).